Here is a 1227-residue protein sequence, read N- to C-terminus: MANGVIPPPGGPSPLPQVRVPLEEPPLGPDVEEEDDDLGKTLAVSRFGDLISKTPAWDPEKPSRSYSERDFEFHRHTSHHTHHPLSARLPPPHKLRRLPPTSARHARRKRKKEKTSAPPSEGTPPIQEEGGAGAEEEEEEEEEEEGESEAEPVEPPPPGPPQKAKFSIGSDEDDSPGLSIKAPCAKALPSVGLPSDQSPQRSGSSPSPRARASRISTEKSRPWSPSASYDLRERLCPGSALGNPGPEQRVPTDEAEAQMLGSADLDDMKSHRLEDNPGVRRHLVKKPSRIQGGRGSPSGLAPILRRKKKKKKLDRRPHEVFVELNELMLDRSQEPHWRETARWIKFEEDVEEETERWGKPHVASLSFRSLLELRRTIAQGAALLDLEQTTLPGIAHLVVETMIVSDQIRPEDRASVLRTLLLKHSHPNDDKDSGFFPRNPSSSSVNSVLGNHHPTPSHGPDGAVPTMADDLGEPAPLWPHDPDAKEKPLHMPGGDGHRGKSLKLLEKIPEDAEATVVLVGSVPFLEQPAAAFVRLSEAVLLESVLEVPVPVRFLFVMLGPSHTSTDYHELGRSIATLMSDKLFHEAAYQADDRQDLLGAISEFLDGSIVIPPSEVEGRDLLRSVAAFQRELLRKRREREQTKVEMTTRGGYVAPGKELSLEMGGSEATSEDDPLQRTGSVFGGLVRDVKRRYPHYPSDLRDALHSQCVAAVLFIYFAALSPAITFGGLLGEKTEGLMGVSELIVSTAVLGVLFSLLGAQPLLVVGFSGPLLVFEEAFFKFCRAQDLEYLTGRVWVGLWLVVFVLALVAAEGSFLVRYISPFTQEIFAFLISLIFIYETFHKLYKVFTEHPLLPFYPPEEALEPGLELNSSALPPTEGPPGPRNQPNTALLSLILMLGTFLIAFFLRKFRNSRFLGGKARRVIGDFGIPISILVMVLVDYSITDTYTQKLTVPTGLSVTSPHKRTWFIPPLGSARPFPPWMMVAAAVPALLVLILIFMETQITALIVSQKARRLLKGSGFHLDLLLIGSLGGLCGLFGLPWLTAATVRSVTHVNALTVMRTAIAPGDKPQIQEVREQRVTGVLIASLVGLSIVMGAVLRRIPLAVLFGIFLYMGVTSLSGIQLSQRLLLIFMPAKHHPEQPYVTKVKTWRMHLFTFIQLGCIALLWVVKSTVASLAFPFLLLLTVPLRRCLLPRLFQDRELQALDSEDAEPNFDEDGQDEYNELHMPV.

Over residues 1 to 15 (MANGVIPPPGGPSPL) the composition is skewed to pro residues. Disordered regions lie at residues 1–255 (MANG…TDEA), 286–312 (KPSR…KKKK), and 428–497 (NDDK…GDGH). Topologically, residues 1–707 (MANGVIPPPG…DLRDALHSQC (707 aa)) are cytoplasmic. Residues 58 to 75 (DPEKPSRSYSERDFEFHR) are compositionally biased toward basic and acidic residues. 2 stretches are compositionally biased toward basic residues: residues 76 to 97 (HTSH…KLRR) and 104 to 113 (RHARRKRKKE). Residues 134–152 (AEEEEEEEEEEEGESEAEP) are compositionally biased toward acidic residues. 4 positions are modified to phosphoserine: Ser167, Ser170, Ser175, and Ser198. Positions 194 to 215 (PSDQSPQRSGSSPSPRARASRI) are enriched in low complexity. At Arg294 the chain carries Omega-N-methylarginine. The segment covering 435–448 (FFPRNPSSSSVNSV) has biased composition (low complexity). The segment covering 480 to 497 (HDPDAKEKPLHMPGGDGH) has biased composition (basic and acidic residues). Helical transmembrane passes span 708–730 (VAAV…GLLG), 736–773 (LMGV…LLVF), 793–815 (VWVG…SFLV), and 825–846 (IFAF…YKVF). The membrane (anion exchange) stretch occupies residues 708–1227 (VAAVLFIYFA…DEYNELHMPV (520 aa)). An N-linked (GlcNAc...) asparagine glycan is attached at Asn868. The helical transmembrane segment at 888-905 (ALLSLILMLGTFLIAFFL) threads the bilayer. At 906 to 920 (RKFRNSRFLGGKARR) the chain is on the cytoplasmic side. Helical transmembrane passes span 921–941 (VIGD…DYSI), 975–997 (PFPP…LIFM), 1023–1044 (LLLI…LTAA), 1078–1123 (VTGV…IQLS), and 1150–1186 (MHLF…TVPL). Cys1160 is lipidated: S-palmitoyl cysteine.

This sequence belongs to the anion exchanger (TC 2.A.31) family. As to expression, expressed in the brain and heart.

The protein resides in the cell membrane. It catalyses the reaction hydrogencarbonate(in) + chloride(out) = hydrogencarbonate(out) + chloride(in). Its function is as follows. Sodium-independent anion exchanger which mediates the electroneutral exchange of chloride for bicarbonate ions across the cell membrane. May be involved in the regulation of intracellular pH, and the modulation of cardiac action potential. The protein is Anion exchange protein 3 (Slc4a3) of Rattus norvegicus (Rat).